A 402-amino-acid chain; its full sequence is Plasminogen activator inhibitor 1 (402 aa).

The signal sequence occupies residues 1-23 (MRMSLVFACLAMGLALTFAEGSA). Residues asparagine 232, asparagine 288, and asparagine 352 are each glycosylated (N-linked (GlcNAc...) asparagine).

The protein belongs to the serpin family. In terms of assembly, forms a heterodimer with TMPRSS7. Interacts with VTN. Binds LRP1B; binding is followed by internalization and degradation. Interacts with PPP1CB. In complex with PLAU/uPA, interacts with PLAUR/uPAR. Interacts with SORL1 and LRP1, either alone or in complex with PLAU; these interactions are abolished in the presence of LRPAP1/RAP. The ternary complex composed of PLAUR-PLAU-PAI1 also interacts with SORL1. Interacts with PLAT/tPA. Also interacts with SORL1, when complexed to PLAT/tPA.

The protein localises to the secreted. Its function is as follows. Serine protease inhibitor. Inhibits TMPRSS7. Is a primary inhibitor of tissue-type plasminogen activator (PLAT) and urokinase-type plasminogen activator (PLAU). As PLAT inhibitor, it is required for fibrinolysis down-regulation and is responsible for the controlled degradation of blood clots. As PLAU inhibitor, it is involved in the regulation of cell adhesion and spreading. Acts as a regulator of cell migration, independently of its role as protease inhibitor. It is required for stimulation of keratinocyte migration during cutaneous injury repair. It is involved in cellular and replicative senescence. Plays a role in alveolar type 2 cells senescence in the lung. Is involved in the regulation of cementogenic differentiation of periodontal ligament stem cells, and regulates odontoblast differentiation and dentin formation during odontogenesis. This Sus scrofa (Pig) protein is Plasminogen activator inhibitor 1 (SERPINE1).